We begin with the raw amino-acid sequence, 553 residues long: MAKQIVHGEESRQSILRGVNVLADAVKVTLGPKGRNVVIDKKFGSPLITKDGVTVAKEIELKDTLENMGAQMVKEVASKTSDIAGDGTTTATVLAQAIYREGVKNVAAGSNPMALKRGIDKAVTAVCGYNDAEGNRIPGALDKFSKPVTGEMIAQVGTISANNDETIGKIIAEAMKKVGKDGVITVEESKTMETQLEVVEGMQFDRGYLSPYFVTDPERMEAVLENPYILIHEKKVSSMKDLLPLLEQIAKGGRPLVIIAEDVEGEALATLVVNKLRGTLNVAAVKAPGFGDRRKAMLQDIAILTGGKAITEDLGIKLENVHMDDLGSAKKVTIDKDNTTIVEGKGKSSDIEGRVKEIRSQVEKTTSDYDREKLQERLAKLVGGVAVIKVGAATETEMKEKKARVEDAMHATRAAVEEGIVPGGGVALIRCVEAVDALKLTGDEGIGANIIKRALEEPLRQIVGNAGEEGAIVVGKIRDHKDPHYGYNAQTSEYVDLVKAGVIDPTKVTRTALQNAGSIAGLMLTTEALISEIPEEKKSEPAGGHGGGMGGMY.

ATP contacts are provided by residues 29–32 (TLGP), K50, 86–90 (DGTTT), G424, and D504.

This sequence belongs to the chaperonin (HSP60) family. Forms a cylinder of 14 subunits composed of two heptameric rings stacked back-to-back. Interacts with the co-chaperonin GroES.

The protein resides in the cytoplasm. It catalyses the reaction ATP + H2O + a folded polypeptide = ADP + phosphate + an unfolded polypeptide.. Together with its co-chaperonin GroES, plays an essential role in assisting protein folding. The GroEL-GroES system forms a nano-cage that allows encapsulation of the non-native substrate proteins and provides a physical environment optimized to promote and accelerate protein folding. The polypeptide is Chaperonin GroEL (Koribacter versatilis (strain Ellin345)).